Consider the following 402-residue polypeptide: Propionate kinase (402 aa).

ATP-binding residues include N11 and K18. N11 contacts Mg(2+). Residue R86 participates in substrate binding. D143 acts as the Proton donor/acceptor in catalysis. ATP is bound by residues H175, 203 to 207 (HLGNG), 278 to 280 (DLR), and 326 to 330 (GIGEN).

It belongs to the acetokinase family. TdcD subfamily. As to quaternary structure, homodimer. The cofactor is Mg(2+).

The catalysed reaction is propanoate + ATP = propanoyl phosphate + ADP. It participates in amino-acid degradation; L-threonine degradation via propanoate pathway; propanoate from L-threonine: step 4/4. In terms of biological role, catalyzes the conversion of propionyl phosphate and ADP to propionate and ATP. This Salmonella typhimurium (strain D23580) protein is Propionate kinase.